We begin with the raw amino-acid sequence, 408 residues long: UPF0496 protein At5g66670 (408 aa).

2 helical membrane passes run 239-259 and 262-282; these read VVFA…AAMM and PVLS…GMWC.

The protein belongs to the UPF0496 family.

Its subcellular location is the membrane. This is UPF0496 protein At5g66670 from Arabidopsis thaliana (Mouse-ear cress).